An 81-amino-acid chain; its full sequence is Putative chemokine-related protein B42 (81 aa).

Intrachain disulfides connect C7–C73, C8–C29, and C11–C45.

As to expression, expressed in placenta, heart, lung, liver, pancreas, skeletal muscle and brain.

Its subcellular location is the cytoplasm. The protein is Putative chemokine-related protein B42 of Homo sapiens (Human).